Reading from the N-terminus, the 282-residue chain is Large ribosomal subunit protein uL4c (282 aa).

The N-terminal 43 residues, 1–43 (MAASLSFFSSSIFLSNPNIQSSKHLLFRSPKQLSVAAIATIRS), are a transit peptide targeting the chloroplast. Disordered regions lie at residues 86–133 (RNQR…GGVV) and 251–282 (RYGD…ESSE). The segment covering 255 to 282 (ENEWEDEEEDDQEDNDGGEAEESTESSE) has biased composition (acidic residues).

Belongs to the universal ribosomal protein uL4 family. Part of the 50S ribosomal subunit.

The protein localises to the plastid. It localises to the chloroplast. In terms of biological role, this protein binds directly and specifically to 23S rRNA. May play a role in plastid transcriptional regulation. The polypeptide is Large ribosomal subunit protein uL4c (RPL4) (Nicotiana tabacum (Common tobacco)).